Reading from the N-terminus, the 495-residue chain is Bile acid-sensitive ion channel (495 aa).

Positions methionine 1–serine 30 are binds the plasma membrane and stabilizes the channel in the closed state. Residues methionine 1–arginine 61 are Cytoplasmic-facing. A helical membrane pass occupies residues lysine 62 to serine 82. The Extracellular segment spans residues arginine 83–threonine 459. 6 disulfide bridges follow: cysteine 112–cysteine 207, cysteine 185–cysteine 192, cysteine 298–cysteine 377, cysteine 315–cysteine 373, cysteine 328–cysteine 350, and cysteine 330–cysteine 342. 2 N-linked (GlcNAc...) asparagine glycosylation sites follow: asparagine 147 and asparagine 163. Residue asparagine 306 is glycosylated (N-linked (GlcNAc...) asparagine). Asparagine 370, asparagine 405, and asparagine 421 each carry an N-linked (GlcNAc...) asparagine glycan. The GAS motif; ion selectivity filter signature appears at glycine 454 to serine 456. A helical transmembrane segment spans residues isoleucine 460–leucine 480. At lysine 481–valine 495 the chain is on the cytoplasmic side.

This sequence belongs to the amiloride-sensitive sodium channel (TC 1.A.6) family. ASIC5 subfamily. In terms of assembly, forms homotrimeric channels. In terms of tissue distribution, expressed by cholangiocytes (at protein level). Detected in brain, liver, duodenum, jejunum, ileum and testis.

The protein resides in the apical cell membrane. It is found in the cell membrane. The enzyme catalyses Na(+)(in) = Na(+)(out). It carries out the reaction Li(+)(in) = Li(+)(out). The catalysed reaction is K(+)(in) = K(+)(out). It catalyses the reaction H(+)(in) = H(+)(out). Its activity is regulated as follows. Inhibited by the diuretic drug amiloride. Inhibited by diminazene. Inhibited by extracellular Ca(2+). Its function is as follows. Forms bile acid-gated sodium channels and may play a role in bile acid-dependent absorption and secretion by epithelial cells of the bile ducts. Displays high selectivity for sodium ions but can also permit the permeation of other cations. The gating could be indirect and the consequence of alterations of the membrane environment of the channel by bile acids. As a sodium channel of type II unipolar brush cells of the vestibulocerebellum, controlling the electrical activity of these cells, could play a role in motor coordination and balance. The protein is Bile acid-sensitive ion channel of Rattus norvegicus (Rat).